Reading from the N-terminus, the 179-residue chain is ATP synthase subunit delta (179 aa).

This sequence belongs to the ATPase delta chain family. As to quaternary structure, F-type ATPases have 2 components, F(1) - the catalytic core - and F(0) - the membrane proton channel. F(1) has five subunits: alpha(3), beta(3), gamma(1), delta(1), epsilon(1). F(0) has three main subunits: a(1), b(2) and c(10-14). The alpha and beta chains form an alternating ring which encloses part of the gamma chain. F(1) is attached to F(0) by a central stalk formed by the gamma and epsilon chains, while a peripheral stalk is formed by the delta and b chains.

The protein localises to the cell membrane. F(1)F(0) ATP synthase produces ATP from ADP in the presence of a proton or sodium gradient. F-type ATPases consist of two structural domains, F(1) containing the extramembraneous catalytic core and F(0) containing the membrane proton channel, linked together by a central stalk and a peripheral stalk. During catalysis, ATP synthesis in the catalytic domain of F(1) is coupled via a rotary mechanism of the central stalk subunits to proton translocation. Functionally, this protein is part of the stalk that links CF(0) to CF(1). It either transmits conformational changes from CF(0) to CF(1) or is implicated in proton conduction. This Listeria innocua serovar 6a (strain ATCC BAA-680 / CLIP 11262) protein is ATP synthase subunit delta.